Consider the following 320-residue polypeptide: 7-acetyl-epi-neemfruitin B aldo-keto reductase (320 aa).

NADP(+) is bound at residue aspartate 51. Catalysis depends on tyrosine 56, which acts as the Proton donor. NADP(+) is bound by residues glutamine 186 and 264-272 (FNKQRMEEN).

The protein belongs to the aldo/keto reductase family. As to expression, mainly expressed in petioles and, to a lower extent, in roots.

The catalysed reaction is 7-acetyl-epi-neemfruitin B + AH2 + H2O = (1S,3bR,4R,5aR,9aR,9bR,11aS)-1-[(4R)-5-[(2S)-3,3-dimethyloxiran-2-yl]-1,4-dihydroxybutan-2-yl]-3b,6,6,9a,11a-pentamethyl-7-oxo-1H,2H,3bH,4H,5H,5aH,6H,7H,9aH,9bH,10H,11H,11aH-cyclopenta[a]phenanthren-4-yl acetate + acetate + A + H(+). The protein operates within secondary metabolite biosynthesis; terpenoid biosynthesis. Its function is as follows. Aldo-keto reductase involved in the biosynthesis of limonoids triterpene natural products such as azadirachtin, an antifeedant widely used as bioinsecticide, and possessing many medicinal applications including anti-tumoral, anti-malarial, anti-rheumatic, antibacterial, anti-inflammatory, anti-pyretic and diuretic effects. Can use 7-acetyl-epi-neemfruitin B as substrate. The chain is 7-acetyl-epi-neemfruitin B aldo-keto reductase from Melia azedarach (Chinaberry tree).